A 1733-amino-acid polypeptide reads, in one-letter code: Probable nuclear antigen (1733 aa).

Disordered stretches follow at residues 1–41 (MNLF…THFT), 71–394 (PHPP…EQQV), 437–506 (AGAG…EGAQ), 520–548 (APAA…EGGA), 882–907 (LGGG…GAAL), 993–1141 (AGGP…EDAA), 1223–1242 (PERV…RGHA), 1348–1475 (GAGP…GRAG), 1585–1608 (SGGG…WGSG), and 1630–1665 (PRRR…RGGC). Residues 21–31 (DHHHQQHHHHP) are compositionally biased toward basic residues. The segment covering 77 to 97 (PQDHHRPTPARDHRDPRDHLP) has biased composition (basic and acidic residues). The span at 113 to 131 (TTTTTIKDPQHPQDPLLLP) shows a compositional bias: low complexity. Basic and acidic residues predominate over residues 135 to 147 (LQEEDPHLLRPTR). Positions 179-189 (GGGPPSPPPRP) are enriched in pro residues. Residues 190 to 201 (STSSSSSHQGPP) show a composition bias toward low complexity. Residues 202–220 (STRPPPPQRPPPRWPPPSP) are compositionally biased toward pro residues. Positions 227-240 (RAGSENTAQTLFSH) are enriched in polar residues. The segment covering 272–299 (PPPSPPPRPPPPLPPPPPPPPPPQPPPA) has biased composition (pro residues). Over residues 316-326 (GGRRRGGKRRR) the composition is skewed to basic residues. The span at 336-354 (DAEEEEDGDGDEDEDEDRA) shows a compositional bias: acidic residues. Over residues 355-364 (EGEGREDGGE) the composition is skewed to basic and acidic residues. Composition is skewed to gly residues over residues 365 to 374 (GPRGAGGGAG), 454 to 466 (GAPG…GLEG), and 479 to 494 (GGDG…GLGV). Residues 495 to 506 (GLQQRRGAEGAQ) show a composition bias toward low complexity. A compositionally biased stretch (gly residues) spans 882 to 892 (LGGGGGGGQQR). The segment covering 893-907 (GSGVRSGPESEGAAL) has biased composition (low complexity). 2 stretches are compositionally biased toward gly residues: residues 993-1004 (AGGPGAGEAGGG) and 1027-1043 (AGRG…LGEP). Basic and acidic residues-rich tracts occupy residues 1078–1087 (GAGDEGDRVR) and 1100–1112 (RVAE…RHLL). The span at 1116 to 1127 (GPEGGRGAGGRG) shows a compositional bias: gly residues. The segment covering 1385–1407 (GPGGLRGRGRGGRGGGGGGGGRG) has biased composition (gly residues). 2 stretches are compositionally biased toward basic residues: residues 1408-1420 (PRGR…RRWR) and 1444-1453 (RGGRGGRGGR). The segment covering 1454–1474 (GRGGGRAPRGGGGGPGGGGRA) has biased composition (gly residues). The span at 1652 to 1665 (RGAGRAGGGGRGGC) shows a compositional bias: gly residues.

The sequence is that of Probable nuclear antigen from Sus scrofa (Pig).